We begin with the raw amino-acid sequence, 238 residues long: Dolichyldiphosphatase 1 (238 aa).

The next 4 helical transmembrane spans lie at 33–53, 100–120, 130–150, and 162–182; these read LAYLSLSPVVIIVGFVTLIIF, PSSHSQFMWFFSVYSFLFLYL, FLDLLWRHVLSLGLLTAAFLV, and WSQVLYGGVAGSLMAIAWFAF.

This sequence belongs to the dolichyldiphosphatase family.

The protein localises to the endoplasmic reticulum membrane. It carries out the reaction a di-trans,poly-cis-dolichyl diphosphate + H2O = a di-trans,poly-cis-dolichyl phosphate + phosphate + H(+). The protein operates within protein modification; protein glycosylation. Its function is as follows. Required for efficient N-glycosylation. Necessary for maintaining optimal levels of dolichol-linked oligosaccharides. Hydrolyzes dolichyl pyrophosphate at a very high rate and dolichyl monophosphate at a much lower rate. Does not act on phosphatidate. This is Dolichyldiphosphatase 1 (DOLPP1) from Rhinolophus ferrumequinum (Greater horseshoe bat).